A 314-amino-acid polypeptide reads, in one-letter code: Probable RuBisCO transcriptional regulator (314 aa).

The 58-residue stretch at 6–63 folds into the HTH lysR-type domain; it reads FTLDQLKIIKTIHREGSFKTAAKKLYISQPAVSRQVQNLERQLNTPIFYRDKRKARLT. Residues 23-42 constitute a DNA-binding region (H-T-H motif); sequence FKTAAKKLYISQPAVSRQVQ.

Belongs to the LysR transcriptional regulatory family.

It localises to the plastid. The protein resides in the chloroplast. Its function is as follows. Trans-acting transcriptional regulator of RuBisCO genes (rbcL and rbcS) expression. This is Probable RuBisCO transcriptional regulator (rbcR) from Emiliania huxleyi (Coccolithophore).